The primary structure comprises 147 residues: MERTYLMIKPDGVQRNLIGEIVSRFEKKGFTLIGAKLMTVTKEQAETHYAEHKERPFFGELVDFITSGPVFAMVWEGENVIATARKMMGATNPADAEPGTIRGDFGVQVAMNVIHGSDSPESAKREIDIFFDSSELNEYDKVVNRWV.

The ATP site is built by K9, F57, R85, T91, R102, and N112. T91 is modified (phosphothreonine). The active-site Pros-phosphohistidine intermediate is H115. Position 122 is a phosphoserine (S122).

The protein belongs to the NDK family. As to quaternary structure, homotetramer. It depends on Mg(2+) as a cofactor.

Its subcellular location is the cytoplasm. It catalyses the reaction a 2'-deoxyribonucleoside 5'-diphosphate + ATP = a 2'-deoxyribonucleoside 5'-triphosphate + ADP. It carries out the reaction a ribonucleoside 5'-diphosphate + ATP = a ribonucleoside 5'-triphosphate + ADP. Functionally, major role in the synthesis of nucleoside triphosphates other than ATP. The ATP gamma phosphate is transferred to the NDP beta phosphate via a ping-pong mechanism, using a phosphorylated active-site intermediate. This Halalkalibacterium halodurans (strain ATCC BAA-125 / DSM 18197 / FERM 7344 / JCM 9153 / C-125) (Bacillus halodurans) protein is Nucleoside diphosphate kinase.